The chain runs to 270 residues: 3-methyl-2-oxobutanoate hydroxymethyltransferase (270 aa).

Mg(2+) is bound by residues Asp-50 and Asp-89. 3-methyl-2-oxobutanoate contacts are provided by residues 50-51, Asp-89, and Lys-118; that span reads DS. Residue Glu-120 participates in Mg(2+) binding. Glu-187 functions as the Proton acceptor in the catalytic mechanism.

Belongs to the PanB family. In terms of assembly, homodecamer; pentamer of dimers. Requires Mg(2+) as cofactor.

It localises to the cytoplasm. It catalyses the reaction 3-methyl-2-oxobutanoate + (6R)-5,10-methylene-5,6,7,8-tetrahydrofolate + H2O = 2-dehydropantoate + (6S)-5,6,7,8-tetrahydrofolate. It participates in cofactor biosynthesis; (R)-pantothenate biosynthesis; (R)-pantoate from 3-methyl-2-oxobutanoate: step 1/2. Its function is as follows. Catalyzes the reversible reaction in which hydroxymethyl group from 5,10-methylenetetrahydrofolate is transferred onto alpha-ketoisovalerate to form ketopantoate. This chain is 3-methyl-2-oxobutanoate hydroxymethyltransferase, found in Helicobacter acinonychis (strain Sheeba).